The chain runs to 345 residues: Growth hormone-inducible transmembrane protein (345 aa).

Residues 1–45 (MLAARLVCLRTLPSRVFHPAFTKASPVVKNSITKNQWLLTPSREY) constitute a mitochondrion transit peptide. Residues 46 to 82 (ATKTRIGIRRGRTGQELKEAALEPSMEKIFKIDQMGR) lie on the Mitochondrial matrix side of the membrane. The chain crosses the membrane as a helical span at residues 83–103 (WFVAGGAAVGLGALCYYGLGL). Over 104 to 125 (SNEIGAIEKAVIWPQYVKDRIH) the chain is Mitochondrial intermembrane. A helical membrane pass occupies residues 126-146 (STYMYLAGSIGLTALSAIAIS). At 147–159 (RTPVLMNFMMRGS) the chain is on the mitochondrial matrix side. The helical transmembrane segment at 160-180 (WVTIGVTFAAMVGAGMLVRSI) threads the bilayer. The Mitochondrial intermembrane segment spans residues 181 to 190 (PYDQSPGPKH). Residues 191–211 (LAWLLHSGVMGAVVAPLTILG) traverse the membrane as a helical segment. Residues 212-213 (GP) are Mitochondrial matrix-facing. Residues 214 to 234 (LLIRAAWYTAGIVGGLSTVAM) form a helical membrane-spanning segment. Topologically, residues 235 to 244 (CAPSEKFLNM) are mitochondrial intermembrane. Residues 245–265 (GAPLGVGLGLVFVSSLGSMFL) traverse the membrane as a helical segment. Residues 266 to 271 (PPTTVA) are Mitochondrial matrix-facing. A helical membrane pass occupies residues 272–292 (GATLYSVAMYGGLVLFSMFLL). The Mitochondrial intermembrane portion of the chain corresponds to 293–345 (YDTQKVIKRAEVSPMYGVQKYDPINSMLSIYMDTLNIFMRVATMLATGGNRKK).

The protein belongs to the BI1 family. In terms of assembly, interacts with LETM1. Interacts with AFG3L2. In terms of processing, undergoes AFG3L2-mediated proteolytic degradation, upon hyperpolarization of mitochondria.

Its subcellular location is the mitochondrion inner membrane. It carries out the reaction Ca(2+)(in) + 2 H(+)(out) = Ca(2+)(out) + 2 H(+)(in). The enzyme catalyses K(+)(in) + H(+)(out) = K(+)(out) + H(+)(in). In terms of biological role, plays an important role in maintenance of mitochondrial morphology and in mediating either calcium or potassium/proton antiport. Mediates proton-dependent calcium efflux from mitochondrion. Also functions as an electroneutral mitochondrial proton/potassium exchanger. Required for the mitochondrial tubular network and cristae organization. Involved in apoptotic release of cytochrome c. Inhibits the proteolytic activity of AFG3L2, stimulating respiration and stabilizing respiratory enzymes in actively respiring mitochondria. However, when mitochondria become hyperpolarized, GHITM loses its inhibitory activity toward AFG3L2 and the now the active AFG3L2 turns first on GHITM and, if hyperpolarization persists, on other proteins of the mitochondria, leading to a broad remodeling of the mitochondrial proteome. In Homo sapiens (Human), this protein is Growth hormone-inducible transmembrane protein (GHITM).